The primary structure comprises 508 residues: UDP-N-acetylmuramoyl-L-alanyl-D-glutamate--2,6-diaminopimelate ligase (508 aa).

UDP-N-acetyl-alpha-D-muramoyl-L-alanyl-D-glutamate is bound at residue serine 33. Residue 121–127 coordinates ATP; that stretch reads GTNGKST. Residues asparagine 162, 163–164, serine 190, glutamine 196, and arginine 198 contribute to the UDP-N-acetyl-alpha-D-muramoyl-L-alanyl-D-glutamate site; that span reads TT. Residue lysine 230 is modified to N6-carboxylysine. Meso-2,6-diaminopimelate contacts are provided by residues arginine 399, 423–426, glycine 474, and glutamate 478; that span reads DNPR. Positions 423–426 match the Meso-diaminopimelate recognition motif motif; the sequence is DNPR.

The protein belongs to the MurCDEF family. MurE subfamily. Mg(2+) serves as cofactor. Carboxylation is probably crucial for Mg(2+) binding and, consequently, for the gamma-phosphate positioning of ATP.

The protein localises to the cytoplasm. The enzyme catalyses UDP-N-acetyl-alpha-D-muramoyl-L-alanyl-D-glutamate + meso-2,6-diaminopimelate + ATP = UDP-N-acetyl-alpha-D-muramoyl-L-alanyl-gamma-D-glutamyl-meso-2,6-diaminopimelate + ADP + phosphate + H(+). It participates in cell wall biogenesis; peptidoglycan biosynthesis. Its function is as follows. Catalyzes the addition of meso-diaminopimelic acid to the nucleotide precursor UDP-N-acetylmuramoyl-L-alanyl-D-glutamate (UMAG) in the biosynthesis of bacterial cell-wall peptidoglycan. The chain is UDP-N-acetylmuramoyl-L-alanyl-D-glutamate--2,6-diaminopimelate ligase from Buchnera aphidicola subsp. Baizongia pistaciae (strain Bp).